A 496-amino-acid polypeptide reads, in one-letter code: Apolipoprotein N-acyltransferase (496 aa).

6 helical membrane-spanning segments follow: residues 23–43 (GIAT…FILW), 50–70 (LANF…LYEL), 84–104 (LIIS…LVYL), 126–146 (LTIK…ILSQ), 171–191 (WIGA…IYLI), and 205–225 (FLFG…TNPI). One can recognise a CN hydrolase domain in the interval 236–464 (WQTNMPTREK…NDVVNPNFSI (229 aa)). The active-site Proton acceptor is the E276. The active site involves K325. C374 functions as the Nucleophile in the catalytic mechanism. The chain crosses the membrane as a helical span at residues 476–496 (PLFLLCLFLIGLNLYFGKFTN).

Belongs to the CN hydrolase family. Apolipoprotein N-acyltransferase subfamily.

The protein resides in the cell inner membrane. The enzyme catalyses N-terminal S-1,2-diacyl-sn-glyceryl-L-cysteinyl-[lipoprotein] + a glycerophospholipid = N-acyl-S-1,2-diacyl-sn-glyceryl-L-cysteinyl-[lipoprotein] + a 2-acyl-sn-glycero-3-phospholipid + H(+). The protein operates within protein modification; lipoprotein biosynthesis (N-acyl transfer). In terms of biological role, catalyzes the phospholipid dependent N-acylation of the N-terminal cysteine of apolipoprotein, the last step in lipoprotein maturation. This chain is Apolipoprotein N-acyltransferase, found in Prochlorococcus marinus subsp. pastoris (strain CCMP1986 / NIES-2087 / MED4).